The chain runs to 117 residues: Flagellar transcriptional regulator FlhD (117 aa).

Belongs to the FlhD family. As to quaternary structure, homodimer; disulfide-linked. Forms a heterohexamer composed of two FlhC and four FlhD subunits. Each FlhC binds a FlhD dimer, forming a heterotrimer, and a hexamer assembles by dimerization of two heterotrimers.

Its subcellular location is the cytoplasm. Functions in complex with FlhC as a master transcriptional regulator that regulates transcription of several flagellar and non-flagellar operons by binding to their promoter region. Activates expression of class 2 flagellar genes, including fliA, which is a flagellum-specific sigma factor that turns on the class 3 genes. Also regulates genes whose products function in a variety of physiological pathways. This chain is Flagellar transcriptional regulator FlhD, found in Erwinia amylovora (strain CFBP1430).